A 289-amino-acid polypeptide reads, in one-letter code: Phosphatidylglycerol--prolipoprotein diacylglyceryl transferase (289 aa).

The next 4 helical transmembrane spans lie at 18–38 (FTIY…YVMA), 54–74 (DFVM…YVIF), 86–106 (VFYI…GVLT), and 116–136 (LSFW…QAIG). Arg-137 contacts a 1,2-diacyl-sn-glycero-3-phospho-(1'-sn-glycerol). The next 3 membrane-spanning stretches (helical) occupy residues 177-197 (HPTF…LLLL), 205-225 (GELF…IEGM), and 236-256 (LRTA…LWWY).

It belongs to the Lgt family.

It localises to the cell membrane. The catalysed reaction is L-cysteinyl-[prolipoprotein] + a 1,2-diacyl-sn-glycero-3-phospho-(1'-sn-glycerol) = an S-1,2-diacyl-sn-glyceryl-L-cysteinyl-[prolipoprotein] + sn-glycerol 1-phosphate + H(+). The protein operates within protein modification; lipoprotein biosynthesis (diacylglyceryl transfer). In terms of biological role, catalyzes the transfer of the diacylglyceryl group from phosphatidylglycerol to the sulfhydryl group of the N-terminal cysteine of a prolipoprotein, the first step in the formation of mature lipoproteins. The chain is Phosphatidylglycerol--prolipoprotein diacylglyceryl transferase from Halalkalibacterium halodurans (strain ATCC BAA-125 / DSM 18197 / FERM 7344 / JCM 9153 / C-125) (Bacillus halodurans).